The chain runs to 250 residues: HTH-type transcriptional regulator SarS (250 aa).

DNA-binding regions (H-T-H motif) lie at residues 53–76 and 177–200; these read FKKIVSDLCYKQSDLVQHIKVLVK and LKDLIETIHHKYPQTVRALNNLKK.

It belongs to the SarA family.

The protein localises to the cytoplasm. In terms of biological role, transcriptional regulator that controls expression of some virulence factors in a cell density-dependent manner. The sequence is that of HTH-type transcriptional regulator SarS (sarS) from Staphylococcus aureus (strain Mu3 / ATCC 700698).